A 664-amino-acid polypeptide reads, in one-letter code: 1,4-alpha-glucan branching enzyme GlgB 2 (664 aa).

Over residues 1-17 the composition is skewed to basic and acidic residues; the sequence is MGGKEMRNCKELKHEKN. The segment at 1–31 is disordered; that stretch reads MGGKEMRNCKELKHEKNGNVTEKVGKNKGKS. Residue Asp342 is the Nucleophile of the active site. Catalysis depends on Glu395, which acts as the Proton donor.

This sequence belongs to the glycosyl hydrolase 13 family. GlgB subfamily. As to quaternary structure, monomer.

It catalyses the reaction Transfers a segment of a (1-&gt;4)-alpha-D-glucan chain to a primary hydroxy group in a similar glucan chain.. It participates in glycan biosynthesis; glycogen biosynthesis. Its function is as follows. Catalyzes the formation of the alpha-1,6-glucosidic linkages in glycogen by scission of a 1,4-alpha-linked oligosaccharide from growing alpha-1,4-glucan chains and the subsequent attachment of the oligosaccharide to the alpha-1,6 position. This chain is 1,4-alpha-glucan branching enzyme GlgB 2 (glgB2), found in Clostridium perfringens (strain 13 / Type A).